A 295-amino-acid polypeptide reads, in one-letter code: Transcriptional regulator SirC (295 aa).

One can recognise an HTH araC/xylS-type domain in the interval 195-292 (EKVYNIIISD…KITPLSFMRT (98 aa)). DNA-binding regions (H-T-H motif) lie at residues 212-233 (AEVAGKLFMSVSSLKRKLAAEE) and 259-282 (ISQVATMCGYDTPSYFIAIFKRHF).

In terms of biological role, positive regulator of the expression of the invasion-associated type III secretion system encoded within SPI-1 (pathogenicity island 1). This chain is Transcriptional regulator SirC (sirC), found in Salmonella typhimurium (strain SL1344).